We begin with the raw amino-acid sequence, 493 residues long: Probable malate:quinone oxidoreductase (493 aa).

The protein belongs to the MQO family. Requires FAD as cofactor.

It carries out the reaction (S)-malate + a quinone = a quinol + oxaloacetate. It functions in the pathway carbohydrate metabolism; tricarboxylic acid cycle; oxaloacetate from (S)-malate (quinone route): step 1/1. The sequence is that of Probable malate:quinone oxidoreductase from Mycobacterium tuberculosis (strain ATCC 25177 / H37Ra).